Reading from the N-terminus, the 149-residue chain is D-aminoacyl-tRNA deacylase (149 aa).

A Gly-cisPro motif, important for rejection of L-amino acids motif is present at residues 137–138 (GP).

Belongs to the DTD family. Homodimer.

The protein localises to the cytoplasm. It carries out the reaction glycyl-tRNA(Ala) + H2O = tRNA(Ala) + glycine + H(+). The catalysed reaction is a D-aminoacyl-tRNA + H2O = a tRNA + a D-alpha-amino acid + H(+). An aminoacyl-tRNA editing enzyme that deacylates mischarged D-aminoacyl-tRNAs. Also deacylates mischarged glycyl-tRNA(Ala), protecting cells against glycine mischarging by AlaRS. Acts via tRNA-based rather than protein-based catalysis; rejects L-amino acids rather than detecting D-amino acids in the active site. By recycling D-aminoacyl-tRNA to D-amino acids and free tRNA molecules, this enzyme counteracts the toxicity associated with the formation of D-aminoacyl-tRNA entities in vivo and helps enforce protein L-homochirality. The sequence is that of D-aminoacyl-tRNA deacylase from Herminiimonas arsenicoxydans.